Consider the following 311-residue polypeptide: MSKILVFGHQNPDSDAIGSSYAFAYLAREAYGLDTEAVALGEPNEETAFVLDYFGVAAPRVITSAKAEGAEQVILTDHNEFQQSVADIAEVEVYGVVDHHRVANFETANPLYMRLEPVGSASSIVYRMFKEHSVAVSKEIAGLMLSGLISDTLLLKSPTTHPTDKAIAPELAELAGVNLEEYGLAMLKAGTNLASKSAEELIDIDAKTFELNGNNVRVAQVNTVDIAEVLERQAEIEAAIEKAIADNGYSDFVLMITDIINSNSEILAIGSNMDKVEAAFNFVLENNHAFLAGAVSRKKQVVPQLTESFNA.

His-9, Asp-13, Asp-15, Asp-77, His-99, and Asp-151 together coordinate Mn(2+).

The protein belongs to the PPase class C family. Homodimer. It depends on Mn(2+) as a cofactor.

It localises to the cytoplasm. The catalysed reaction is diphosphate + H2O = 2 phosphate + H(+). The protein is Probable manganese-dependent inorganic pyrophosphatase (ppaC) of Streptococcus gordonii (strain Challis / ATCC 35105 / BCRC 15272 / CH1 / DL1 / V288).